The following is a 239-amino-acid chain: tRNA (guanine-N(7)-)-methyltransferase (239 aa).

Positions 69, 94, 121, and 144 each coordinate S-adenosyl-L-methionine. Residue Asp144 is part of the active site. Substrate is bound at residue Lys148. The tract at residues 150-155 (RHNKRR) is interaction with RNA. Residues Asp180 and 217–220 (TKFE) each bind substrate.

The protein belongs to the class I-like SAM-binding methyltransferase superfamily. TrmB family. As to quaternary structure, monomer.

The catalysed reaction is guanosine(46) in tRNA + S-adenosyl-L-methionine = N(7)-methylguanosine(46) in tRNA + S-adenosyl-L-homocysteine. Its pathway is tRNA modification; N(7)-methylguanine-tRNA biosynthesis. In terms of biological role, catalyzes the formation of N(7)-methylguanine at position 46 (m7G46) in tRNA. The protein is tRNA (guanine-N(7)-)-methyltransferase of Serratia proteamaculans (strain 568).